Here is a 123-residue protein sequence, read N- to C-terminus: Large ribosomal subunit protein uL14c (123 aa).

Belongs to the universal ribosomal protein uL14 family. In terms of assembly, part of the 50S ribosomal subunit.

It is found in the plastid. It localises to the chloroplast. Binds to 23S rRNA. This is Large ribosomal subunit protein uL14c from Triticum aestivum (Wheat).